Here is a 196-residue protein sequence, read N- to C-terminus: MYDYIKGKLSKITAKFIVVETAGLGYVIYVANPYSFSGYVNQEVTIYLHQVIRDDAHLLFGFHTENEKEIFLNLISVSGIGPTTALAIIAVDDNEGLVSAIDNSDIKYLTKFPKIGKKTAQQMILDLSGKFVEASGESATSRKVSSEQNSNLEEAMEALLALGYKATELKKVKAFFEGTNETVEQYIKSSLKMLMK.

Residues 1–63 (MYDYIKGKLS…DDAHLLFGFH (63 aa)) are domain I. Residues 64–142 (TENEKEIFLN…EASGESATSR (79 aa)) form a domain II region. The interval 143 to 148 (KVSSEQ) is flexible linker. The segment at 148–196 (QNSNLEEAMEALLALGYKATELKKVKAFFEGTNETVEQYIKSSLKMLMK) is domain III.

Belongs to the RuvA family. As to quaternary structure, homotetramer. Forms an RuvA(8)-RuvB(12)-Holliday junction (HJ) complex. HJ DNA is sandwiched between 2 RuvA tetramers; dsDNA enters through RuvA and exits via RuvB. An RuvB hexamer assembles on each DNA strand where it exits the tetramer. Each RuvB hexamer is contacted by two RuvA subunits (via domain III) on 2 adjacent RuvB subunits; this complex drives branch migration. In the full resolvosome a probable DNA-RuvA(4)-RuvB(12)-RuvC(2) complex forms which resolves the HJ.

It localises to the cytoplasm. Its function is as follows. The RuvA-RuvB-RuvC complex processes Holliday junction (HJ) DNA during genetic recombination and DNA repair, while the RuvA-RuvB complex plays an important role in the rescue of blocked DNA replication forks via replication fork reversal (RFR). RuvA specifically binds to HJ cruciform DNA, conferring on it an open structure. The RuvB hexamer acts as an ATP-dependent pump, pulling dsDNA into and through the RuvAB complex. HJ branch migration allows RuvC to scan DNA until it finds its consensus sequence, where it cleaves and resolves the cruciform DNA. The sequence is that of Holliday junction branch migration complex subunit RuvA from Streptococcus agalactiae serotype Ia (strain ATCC 27591 / A909 / CDC SS700).